A 31-amino-acid polypeptide reads, in one-letter code: MQTIPSTTETAADFDAVIXGAGFXGLYALHR.

20-25 lines the FAD pocket; the sequence is GAGFXG.

As to quaternary structure, monomer. Requires FAD as cofactor.

It catalyses the reaction 1-hydroxylimonen-2-one + NADPH + O2 = 3-isopropenyl-6-oxoheptanoate + NADP(+) + H2O. The catalysed reaction is (1R,4S)-1-hydroxylimonen-2-one + NADPH + O2 + H(+) = (4S,7S)-7-hydroxy-4-isopropenyl-7-methyloxepan-2-one + NADP(+) + H2O. It carries out the reaction (1S,4R)-1-hydroxylimonen-2-one + NADPH + O2 + H(+) = (4R,7R)-7-hydroxy-4-isopropenyl-7-methyloxepan-2-one + NADP(+) + H2O. The enzyme catalyses (1R,4R)-dihydrocarvone + NADPH + O2 + H(+) = (4R,7R)-4-isopropenyl-7-methyloxepan-2-one + NADP(+) + H2O. It catalyses the reaction (1S,4R)-menthone + NADPH + O2 + H(+) = (4S,7R)-7-isopropyl-4-methyloxepan-2-one + NADP(+) + H2O. The catalysed reaction is (1R,4S)-menthone + NADPH + O2 + H(+) = (4R,7S)-7-isopropyl-4-methyloxepan-2-one + NADP(+) + H2O. It carries out the reaction (1S,4R)-isodihydrocarvone + NADPH + O2 + H(+) = (3S,6R)-6-isopropenyl-3-methyloxepan-2-one + NADP(+) + H2O. It functions in the pathway terpene metabolism; monoterpene degradation. Functionally, catalyzes the NADPH- and oxygen-dependent oxidation of the monocyclic monoterpene ketones 1-hydroxy-2-oxolimonene, dihydrocarvone and menthone. Is able to convert all enantiomers of these natural substrates with almost equal efficiency. Is thus involved in the conversion of the monocyclic monoterpene ketone intermediates formed in the degradation pathways of all stereoisomers of three different monocyclic monoterpenes, i.e. limonene, (dihydro)carveol and menthol, which likely make R.erythropolis able to grow on these compounds as the sole source of carbon and energy. In Rhodococcus erythropolis (Arthrobacter picolinophilus), this protein is Monocyclic monoterpene ketone monooxygenase.